The sequence spans 854 residues: DNA mismatch repair protein MutS (854 aa).

Position 614–621 (614–621 (GPNMGGKS)) interacts with ATP.

The protein belongs to the DNA mismatch repair MutS family.

This protein is involved in the repair of mismatches in DNA. It is possible that it carries out the mismatch recognition step. This protein has a weak ATPase activity. The protein is DNA mismatch repair protein MutS of Yersinia pestis bv. Antiqua (strain Antiqua).